A 509-amino-acid polypeptide reads, in one-letter code: Apurinic-apyrimidinic endonuclease 1 (509 aa).

Residues 1–24 form the signal peptide; the sequence is MPRHCCCFVFHFLLYMLLINIVKN. A disordered region spans residues 144 to 188; the sequence is EEKDEECDEKTKQDNNKENIKNETIVQKKKIDKNNKTKEKIKTKS. 2 stretches are compositionally biased toward basic and acidic residues: residues 152–164 and 175–188; these read EKTKQDNNKENIK and DKNNKTKEKIKTKS. 9 residues coordinate Zn(2+): His291, His331, Glu367, Asp401, His404, His438, Asp451, His453, and Glu483. His404 is a binding site for Mn(2+). Mn(2+) contacts are provided by Asp451 and His453.

Belongs to the AP endonuclease 2 family. It depends on Zn(2+) as a cofactor. Mn(2+) is required as a cofactor. May be proteolytically cleaved.

It localises to the mitochondrion. Its function is as follows. Plays a role in mitochondrial DNA base excision repair (BER) pathway induced by oxidative stress. Has apurinic/apyrimidinic (AP) endonuclease activity towards double-stranded DNA (dsDNA) with a preference for C as opposite base. Has 3'-phosphatase activity; removes 3'-phosphate from blunt-end, recessed, and gapped DNA templates and thus, removes 3'-blocks for DNA polymerase activity during BER. Lacks 3'-5' exonuclease activity and does not cleave damaged bases by nucleotide incision repair (NIR). This Plasmodium berghei (strain Anka) protein is Apurinic-apyrimidinic endonuclease 1.